The sequence spans 93 residues: Protein FMP16, mitochondrial (93 aa).

A mitochondrion-targeting transit peptide spans 1 to 25; it reads MLRTTFLRTPRQLMRKSPRASFSIV. Residues 30–93 are disordered; that stretch reads FPHLKNNQDE…EQNRPDDGVY (64 aa). The segment covering 35 to 93 has biased composition (basic and acidic residues); that stretch reads NNQDEAEKKEQGLFDSNKKRLDTLEHGKNPDYKQPGMEDLKKKGDDARIEQNRPDDGVY.

The protein resides in the mitochondrion. This Saccharomyces cerevisiae (strain ATCC 204508 / S288c) (Baker's yeast) protein is Protein FMP16, mitochondrial (FMP16).